The chain runs to 212 residues: Small ribosomal subunit protein uS3 (212 aa).

In terms of domain architecture, KH type-2 spans 39–108; that stretch reads IKNYIKERYK…EITISVVEVR (70 aa).

The protein belongs to the universal ribosomal protein uS3 family. As to quaternary structure, part of the 30S ribosomal subunit. Forms a tight complex with proteins S10 and S14.

In terms of biological role, binds the lower part of the 30S subunit head. Binds mRNA in the 70S ribosome, positioning it for translation. In Aquifex aeolicus (strain VF5), this protein is Small ribosomal subunit protein uS3.